The sequence spans 282 residues: Formamidopyrimidine-DNA glycosylase (282 aa).

The active-site Schiff-base intermediate with DNA is the proline 2. Glutamate 3 acts as the Proton donor in catalysis. Lysine 58 (proton donor; for beta-elimination activity) is an active-site residue. Residues histidine 96, arginine 115, and lysine 152 each contribute to the DNA site. An FPG-type zinc finger spans residues 238 to 272 (HVYGRGGQPCERCGEEILKTVLGGRGTHYCPSCQN). The Proton donor; for delta-elimination activity role is filled by arginine 262.

Belongs to the FPG family. Monomer. The cofactor is Zn(2+).

The catalysed reaction is Hydrolysis of DNA containing ring-opened 7-methylguanine residues, releasing 2,6-diamino-4-hydroxy-5-(N-methyl)formamidopyrimidine.. It carries out the reaction 2'-deoxyribonucleotide-(2'-deoxyribose 5'-phosphate)-2'-deoxyribonucleotide-DNA = a 3'-end 2'-deoxyribonucleotide-(2,3-dehydro-2,3-deoxyribose 5'-phosphate)-DNA + a 5'-end 5'-phospho-2'-deoxyribonucleoside-DNA + H(+). Functionally, involved in base excision repair of DNA damaged by oxidation or by mutagenic agents. Acts as a DNA glycosylase that recognizes and removes damaged bases. Has a preference for oxidized purines, such as 7,8-dihydro-8-oxoguanine (8-oxoG). Has AP (apurinic/apyrimidinic) lyase activity and introduces nicks in the DNA strand. Cleaves the DNA backbone by beta-delta elimination to generate a single-strand break at the site of the removed base with both 3'- and 5'-phosphates. The sequence is that of Formamidopyrimidine-DNA glycosylase from Corynebacterium aurimucosum (strain ATCC 700975 / DSM 44827 / CIP 107346 / CN-1) (Corynebacterium nigricans).